The following is a 594-amino-acid chain: Membrane protein insertase YidC (594 aa).

A helical transmembrane segment spans residues 7–27 (YFVAIALSVLILIAWQFFYVS). Positions 36–73 (AAEQAQQAQQTQQQPGAQPAAPGQALPGGAIPSAGESR) are disordered. A compositionally biased stretch (low complexity) spans 37–65 (AEQAQQAQQTQQQPGAQPAAPGQALPGGA). Helical transmembrane passes span 369-389 (LFGN…LIFF), 443-463 (WPIL…YVTI), 488-508 (LFGL…WPII), and 532-552 (FTWM…GLVI).

It belongs to the OXA1/ALB3/YidC family. Type 1 subfamily. In terms of assembly, interacts with the Sec translocase complex via SecD. Specifically interacts with transmembrane segments of nascent integral membrane proteins during membrane integration.

The protein localises to the cell inner membrane. Functionally, required for the insertion and/or proper folding and/or complex formation of integral membrane proteins into the membrane. Involved in integration of membrane proteins that insert both dependently and independently of the Sec translocase complex, as well as at least some lipoproteins. Aids folding of multispanning membrane proteins. The polypeptide is Membrane protein insertase YidC (Rhizobium meliloti (strain 1021) (Ensifer meliloti)).